Reading from the N-terminus, the 235-residue chain is Small ribosomal subunit protein uS3 (235 aa).

In terms of domain architecture, KH type-2 spans 39–107; the sequence is IREFIKEECK…ELHLNIVEVR (69 aa). The tract at residues 213–235 is disordered; it reads QARDRKAQELQDGPAPRGAGGRR.

This sequence belongs to the universal ribosomal protein uS3 family. As to quaternary structure, part of the 30S ribosomal subunit. Forms a tight complex with proteins S10 and S14.

Functionally, binds the lower part of the 30S subunit head. Binds mRNA in the 70S ribosome, positioning it for translation. The protein is Small ribosomal subunit protein uS3 of Ruegeria pomeroyi (strain ATCC 700808 / DSM 15171 / DSS-3) (Silicibacter pomeroyi).